A 350-amino-acid chain; its full sequence is GTPase Obg (350 aa).

Residues 1–158 enclose the Obg domain; sequence MFIDSVKITL…RLVRLELKLI (158 aa). An OBG-type G domain is found at 159–339; the sequence is ADVGLVGFPN…LKFMLLEEIK (181 aa). GTP is bound by residues 165 to 172, 190 to 194, 212 to 215, 280 to 283, and 320 to 322; these read GFPNVGKS, FTTLT, DIPG, SKSD, and SSL. Positions 172 and 192 each coordinate Mg(2+).

Belongs to the TRAFAC class OBG-HflX-like GTPase superfamily. OBG GTPase family. Monomer. It depends on Mg(2+) as a cofactor.

Its subcellular location is the cytoplasm. An essential GTPase which binds GTP, GDP and possibly (p)ppGpp with moderate affinity, with high nucleotide exchange rates and a fairly low GTP hydrolysis rate. Plays a role in control of the cell cycle, stress response, ribosome biogenesis and in those bacteria that undergo differentiation, in morphogenesis control. The chain is GTPase Obg from Campylobacter jejuni subsp. jejuni serotype O:2 (strain ATCC 700819 / NCTC 11168).